The sequence spans 721 residues: bZIP transcription factor 17 (721 aa).

Disordered stretches follow at residues 1 to 51 and 87 to 232; these read MAEP…LMSD and QEQF…EKKR. Topologically, residues 1 to 366 are cytoplasmic; the sequence is MAEPITKEQP…KSEAKTKKVA (366 aa). Over residues 9–25 the composition is skewed to pro residues; it reads QPPPPAPDPNSTYPPPS. Residues 125 to 141 are compositionally biased toward basic and acidic residues; that stretch reads ESPRDSDDRCSGADHNL. The span at 146–170 shows a compositional bias: polar residues; sequence PLSSQGSGNCGSDVSEATNESSPKS. Positions 204-216 are enriched in basic and acidic residues; sequence DESRNSKYRRSGE. The bZIP domain maps to 228-288; that stretch reads DEKKRARLMR…AENATLRQQL (61 aa). The interval 230 to 261 is basic motif; the sequence is KKRARLMRNRESAQLSRQRKKHYVEELEEKVR. The leucine-zipper stretch occupies residues 267 to 274; it reads ITDLNGKI. A disordered region spans residues 337 to 359; it reads PRLKPQNTLGTSKAKKSESKKSE. A helical membrane pass occupies residues 367–387; that stretch reads SISFLGLLFCLFLFGALAPIV. Residues 388 to 721 are Lumenal-facing; that stretch reads NVNYGGISGA…RSGAPHLVTT (334 aa). Over residues 422–436 the composition is skewed to polar residues; that stretch reads TSRSGAGTGVSNSNG. The segment at 422–462 is disordered; that stretch reads TSRSGAGTGVSNSNGMHRGRDSDRGARKNISATESSVTPGN. N-linked (GlcNAc...) asparagine glycosylation is found at asparagine 450, asparagine 462, asparagine 609, and asparagine 617. Positions 451–462 are enriched in polar residues; the sequence is ISATESSVTPGN. Residues 627-630 carry the RRIL cleavage motif motif; the sequence is RRIL. N-linked (GlcNAc...) asparagine glycans are attached at residues asparagine 643 and asparagine 651.

It belongs to the bZIP family. Interacts with BZIP28.

The protein resides in the endoplasmic reticulum membrane. It localises to the golgi apparatus membrane. Its subcellular location is the nucleus. Transcriptional activator involved in salt and osmotic stress responses. Functions as a stress sensor and transducer in a signaling pathway that resembles an ER stress response. Following salt stress, BZIP17 is cleaved by SBT6.1 (S1P) and S2P at the C-terminus and the N-terminal bZIP component is translocated to the nucleus, where it activates the expression of salt stress response genes. Functions as a stress sensor and transducer in ER stress signaling pathway. ER stress induces proteolysis of BZIP17 by SBT6.1 (S1P) and S2P, and the N-terminal bZIP component is translocated to the nucleus, where it activates the expression and production of ER chaperones, as well as protein involved in brassinosteroid (BR) signaling, which is required for stress acclimation and growth. This Arabidopsis thaliana (Mouse-ear cress) protein is bZIP transcription factor 17.